The chain runs to 332 residues: HTH-type transcriptional regulator IdnR (332 aa).

In terms of domain architecture, HTH lacI-type spans 6–60; sequence ISLQDIATLAGVTKMTVSRYIRSPKKVAKETGERIAKIMEEINYIPNRAPGMLLN. The segment at residues 8-27 is a DNA-binding region (H-T-H motif); that stretch reads LQDIATLAGVTKMTVSRYIR.

Functionally, idn operon regulator. May repress gntKU and gntT genes when growing on L-idonate. This is HTH-type transcriptional regulator IdnR (idnR) from Escherichia coli (strain K12).